A 594-amino-acid chain; its full sequence is Class I diterpene synthase TPS6, chloroplastic (594 aa).

Mg(2+) is bound by residues Asp330, Asp334, Asn474, Gln477, and Glu482. The short motif at 330-334 (DDFFD) is the DDXXD motif element.

The protein belongs to the terpene synthase family. Mg(2+) serves as cofactor. Mostly expressed in trichomes of leaves and fruits.

Its subcellular location is the plastid. It localises to the chloroplast. The catalysed reaction is peregrinol diphosphate = labd-13(16),14-diene-9-ol + diphosphate. It catalyses the reaction 9alpha-copalyl diphosphate = syn-isopimara-7,15-diene + diphosphate. The protein operates within secondary metabolite biosynthesis; terpenoid biosynthesis. In terms of biological role, involved in the biosynthesis of labdane-type diterpenoid including cleroda-dienols, and peregrinol lactones and furan derivatives, dopaminergic diterpenoids that can bind to dopamine receptors in the human pituitary gland, have probably ability to lower prolactin levels, and are used to treat menstrual cycle disorders (e.g. premenstrual syndrome and mastodynia). Terpene synthase the catalyzes the conversion of peregrinol diphosphate to labda-13(16),14-dien-9-ol, and of syn-copalyl diphosophate to dehydroabietadiene and syn-isopimara-7,15-diene. The polypeptide is Class I diterpene synthase TPS6, chloroplastic (Vitex agnus-castus (Chaste tree)).